A 401-amino-acid chain; its full sequence is Tetracycline resistance protein, class B (401 aa).

At 1 to 6 (MNSSTK) the chain is on the cytoplasmic side. The helical transmembrane segment at 7 to 30 (IALVITLLDAMGIGLIMPVLPTLL) threads the bilayer. The Periplasmic segment spans residues 31-42 (REFIASEDIANH). The helical transmembrane segment at 43–61 (FGVLLALYALMQVIFAPWL) threads the bilayer. The Cytoplasmic segment spans residues 62–71 (GKMSDRFGRR). The chain crosses the membrane as a helical span at residues 72 to 91 (PVLLLSLIGASLDYLLLAFS). Topologically, residues 92–98 (SALWMLY) are periplasmic. The chain crosses the membrane as a helical span at residues 99 to 119 (LGRLLSGITGATGAVAASVIA). Residues 120–129 (DTTSASQRVK) lie on the Cytoplasmic side of the membrane. The chain crosses the membrane as a helical span at residues 130-152 (WFGWLGASFGLGLIAGPIIGGFA). Residues 153–158 (GEISPH) lie on the Periplasmic side of the membrane. A helical membrane pass occupies residues 159 to 178 (SPFFIAALLNIVTFLVVMFW). Residues 179–211 (FRETKNTRDNTDTEVGVETQSNSVYITLFKTMP) are Cytoplasmic-facing. The chain crosses the membrane as a helical span at residues 212-232 (ILLIIYFSAQLIGQIPATVWV). Over 233-243 (LFTENRFGWNS) the chain is Periplasmic. A helical transmembrane segment spans residues 244–265 (MMVGFSLAGLGLLHSVFQAFVA). At 266–275 (GRIATKWGEK) the chain is on the cytoplasmic side. Residues 276–295 (TAVLLGFIADSSAFAFLAFI) form a helical membrane-spanning segment. Over 296 to 298 (SEG) the chain is Periplasmic. A helical transmembrane segment spans residues 299–322 (WLVFPVLILLAGGGIALPALQGVM). Topologically, residues 323 to 332 (SIQTKSHQQG) are cytoplasmic. A helical transmembrane segment spans residues 333 to 356 (ALQGLLVSLTNATGVIGPLLFAVI). Over 357–365 (YNHSLPIWD) the chain is Periplasmic. The chain crosses the membrane as a helical span at residues 366–387 (GWIWIIGLAFYCIIILLSMTFM). Topologically, residues 388–401 (LTPQAQGSKQETSA) are cytoplasmic.

It belongs to the major facilitator superfamily. TCR/Tet family.

It localises to the cell inner membrane. Resistance to tetracycline by an active tetracycline efflux. This is an energy-dependent process that decreases the accumulation of the antibiotic in whole cells. This protein functions as a metal-tetracycline/H(+) antiporter. The chain is Tetracycline resistance protein, class B (tetA) from Escherichia coli.